The primary structure comprises 607 residues: Chaperone protein DnaK (607 aa).

Position 173 is a phosphothreonine; by autocatalysis (Thr173). The segment covering 577-588 (AQAQQGAEGAAS) has biased composition (low complexity). The segment at 577 to 607 (AQAQQGAEGAASQDDDVVDADFTEVKDDDNK) is disordered. Positions 589-598 (QDDDVVDADF) are enriched in acidic residues.

It belongs to the heat shock protein 70 family.

Acts as a chaperone. This Macrococcus caseolyticus (strain JCSC5402) (Macrococcoides caseolyticum) protein is Chaperone protein DnaK.